We begin with the raw amino-acid sequence, 160 residues long: Type IV major fimbrial protein FimA (160 aa).

Residues 1-7 constitute a propeptide, leader sequence; that stretch reads MKSLQKG. Phenylalanine 8 carries the post-translational modification N-methylphenylalanine. A helical membrane pass occupies residues 8–28; sequence FTLIELMIVVAIIGILAAFAI. Cysteine 63 and cysteine 105 are disulfide-bonded.

It belongs to the N-Me-Phe pilin family. In terms of assembly, the pili are polar flexible filaments of about 5.4 nanometers diameter and 2.5 micrometers average length; they consist of only a single polypeptide chain arranged in a helical configuration of five subunits per turn in the assembled pilus.

The protein localises to the fimbrium. The protein resides in the membrane. Its function is as follows. Major component of the type IV fimbriae that plays an essential role in twitching motility, natural transformation, and protease secretion. The sequence is that of Type IV major fimbrial protein FimA (fimA) from Dichelobacter nodosus (Bacteroides nodosus).